The chain runs to 199 residues: GTP-binding protein Di-Ras2 (199 aa).

Residues 14–21, 33–39, 61–65, and 121–124 each bind GTP; these read GAGGVGKS, RESYIPT, DTTGS, and NKCD. S35 carries the phosphoserine modification. Positions 36–44 match the Effector region motif; it reads YIPTVEDTY. S126 is subject to Phosphoserine. 152 to 153 contributes to the GTP binding site; it reads AK. C196 carries the cysteine methyl ester modification. C196 carries S-geranylgeranyl cysteine lipidation. Positions 197 to 199 are cleaved as a propeptide — removed in mature form; that stretch reads VIM.

This sequence belongs to the small GTPase superfamily. Di-Ras family. In terms of processing, ubiquitinated by the ECS(ASB11) complex via 'Lys-11'-linked ubiquitin chains, leading to its degradation by the proteasome.

Its subcellular location is the cell membrane. The enzyme catalyses GTP + H2O = GDP + phosphate + H(+). Functionally, displays low GTPase activity and exists predominantly in the GTP-bound form. This chain is GTP-binding protein Di-Ras2 (DIRAS2), found in Macaca fascicularis (Crab-eating macaque).